We begin with the raw amino-acid sequence, 687 residues long: A-kinase anchor protein 8 (687 aa).

The interaction with MCM2 stretch occupies residues 1–195 (MEQGYGGYGA…FLRGRGQGRF (195 aa)). The tract at residues 1 to 210 (MEQGYGGYGA…SSTFIRSDPF (210 aa)) is interaction with DPY30. Position 72 is a phosphoserine (Ser-72). 2 disordered regions span residues 105 to 124 (KEGGRGGISSGGEGVQDRDS) and 185 to 218 (GFLRGRGQGRFQDRSNSSTFIRSDPFMPPSASEP). Arg-109 carries the post-translational modification Asymmetric dimethylarginine; alternate. Position 109 is an omega-N-methylarginine; alternate (Arg-109). Residues 109-118 (RGGISSGGEG) are compositionally biased toward gly residues. The interaction with DDX5 stretch occupies residues 109–201 (RGGISSGGEG…QGRFQDRSNS (93 aa)). A Phosphoserine modification is found at Ser-199. Omega-N-methylarginine occurs at positions 232 and 276. The interval 277–379 (SQTRIRDWPR…KQRRRDRMRD (103 aa)) is disordered. 2 stretches are compositionally biased toward basic and acidic residues: residues 280 to 294 (RIRDWPRRRGFERFG) and 311 to 320 (PDAKLARADS). Positions 286 to 303 (RRRGFERFGPDNMGRKRK) match the Bipartite nuclear localization signal motif. Lys-314 participates in a covalent cross-link: Glycyl lysine isopeptide (Lys-Gly) (interchain with G-Cter in SUMO2). Phosphoserine is present on residues Ser-320, Ser-325, and Ser-336. Acidic residues predominate over residues 321–331 (DGDLSENDDGA). Basic and acidic residues predominate over residues 335–357 (RSGDEEFRGEDDLCDSRKQRGEK). The tract at residues 384–447 (RIQFACSVCK…NKKIEKRRQE (64 aa)) is involved in chromatin-binding. C2H2 AKAP95-type zinc fingers lie at residues 389-411 (CSVCKFRSFEDEEIQKHLQSKFH) and 478-501 (CLACDMLIPAQHQLLQRHLHSVDH). An involved in condensin complex recruitment region spans residues 522 to 565 (SVLNNKHIVKMLEKYLKGEDPFVNETADLETEGDENVGEEKEET). Thr-552 is subject to Phosphothreonine. Positions 568–585 (EVAAEVLAEVITAAVKAV) are RII-binding. The interval 572-589 (EVLAEVITAAVKAVEGEG) is required for interaction with MYCBP. A disordered region spans residues 624–659 (QTCEAASETRSIEDKTRGEAAEARNEAAMPTADAGS). Over residues 633–648 (RSIEDKTRGEAAEARN) the composition is skewed to basic and acidic residues. Position 659 is a phosphoserine (Ser-659).

Belongs to the AKAP95 family. Binds to the PKA RII-alpha regulatory subunit PRKAR2A. Interacts (via C-terminus) with FIGN. Interacts with NCAPD2, CCND3, CCNE1, MCM2, RPS6KA1, DDX5, PDE4A. Interacts with MYCBP; MYCBP is translocated to the nucleus and the interaction prevents the association of the PKA catalytic subunit leading to suppression of PKA activity. Interacts with CCND1, CASP3. Interacts with NFKB1; detetcted in the cytoplasm. Interacts with DPY30; mediating AKAP8 association with at least the MLL4/WBP7 HMT complex. Interacts with HDAC3; increased during mitosis. Interacts with GJA1; in the nucleus and in the nuclear membrane; the nuclear association increases with progress of cell cycle G1, S and G2 phase and decreases in M phase. In terms of processing, phosphorylated on tyrosine residues probably by SRC subfamily protein kinases; multiple phosphorylation is leading to dissociation from nuclear structures implicated in chromatin structural changes.

It localises to the nucleus matrix. The protein resides in the nucleus. The protein localises to the nucleolus. Its subcellular location is the cytoplasm. Functionally, anchoring protein that mediates the subcellular compartmentation of cAMP-dependent protein kinase (PKA type II). Acts as an anchor for a PKA-signaling complex onto mitotic chromosomes, which is required for maintenance of chromosomes in a condensed form throughout mitosis. Recruits condensin complex subunit NCAPD2 to chromosomes required for chromatin condensation; the function appears to be independent from PKA-anchoring. Specifically involved in recruitment of CAPD2 to, and condensation of maternal but not paternal chromosomes. May help to deliver cyclin D/E to CDK4 to facilitate cell cycle progression. Required for cell cycle G2/M transition and histone deacetylation during mitosis. In mitotic cells recruits HDAC3 to the vicinity of chromatin leading to deacetylation and subsequent phosphorylation at 'Ser-10' of histone H3; in this function may act redundantly with AKAP8L. Involved in nuclear retention of RPS6KA1 upon ERK activation thus inducing cell proliferation. May be involved in regulation of DNA replication by acting as scaffold for MCM2. Enhances HMT activity of the KMT2 family MLL4/WBP7 complex and is involved in transcriptional regulation. In a teratocarcinoma cell line is involved in retinoic acid-mediated induction of developmental genes implicating H3 'Lys-4' methylation. May be involved in recruitment of active CASP3 to the nucleus in apoptotic cells. May act as a carrier protein of GJA1 for its transport to the nucleus. May play a repressive role in the regulation of rDNA transcription. Preferentially binds GC-rich DNA in vitro. In cells, associates with ribosomal RNA (rRNA) chromatin, preferentially with rRNA promoter and transcribed regions. Involved in modulation of Toll-like receptor signaling. Required for the cAMP-dependent suppression of TNF-alpha in early stages of LPS-induced macrophage activation; the function probably implicates targeting of PKA to NFKB1. This chain is A-kinase anchor protein 8 (Akap8), found in Mus musculus (Mouse).